Here is a 320-residue protein sequence, read N- to C-terminus: Acetyl-coenzyme A carboxylase carboxyl transferase subunit alpha (320 aa).

Residues 42-295 (IEDKAKAALH…GDAIAQAFSD (254 aa)) form the CoA carboxyltransferase C-terminal domain.

Belongs to the AccA family. As to quaternary structure, acetyl-CoA carboxylase is a heterohexamer composed of biotin carboxyl carrier protein (AccB), biotin carboxylase (AccC) and two subunits each of ACCase subunit alpha (AccA) and ACCase subunit beta (AccD).

It localises to the cytoplasm. The enzyme catalyses N(6)-carboxybiotinyl-L-lysyl-[protein] + acetyl-CoA = N(6)-biotinyl-L-lysyl-[protein] + malonyl-CoA. It participates in lipid metabolism; malonyl-CoA biosynthesis; malonyl-CoA from acetyl-CoA: step 1/1. Functionally, component of the acetyl coenzyme A carboxylase (ACC) complex. First, biotin carboxylase catalyzes the carboxylation of biotin on its carrier protein (BCCP) and then the CO(2) group is transferred by the carboxyltransferase to acetyl-CoA to form malonyl-CoA. This is Acetyl-coenzyme A carboxylase carboxyl transferase subunit alpha from Afipia carboxidovorans (strain ATCC 49405 / DSM 1227 / KCTC 32145 / OM5) (Oligotropha carboxidovorans).